A 209-amino-acid chain; its full sequence is 3-dehydroquinate dehydratase (209 aa).

Residues Ser6, 25–27, and Arg55 contribute to the 3-dehydroquinate site; that span reads ELR. The Proton donor/acceptor role is filled by His109. The active-site Schiff-base intermediate with substrate is the Lys134. 3-dehydroquinate is bound by residues Arg172 and Gln195.

It belongs to the type-I 3-dehydroquinase family. Homodimer.

The enzyme catalyses 3-dehydroquinate = 3-dehydroshikimate + H2O. Its pathway is metabolic intermediate biosynthesis; chorismate biosynthesis; chorismate from D-erythrose 4-phosphate and phosphoenolpyruvate: step 3/7. In terms of biological role, involved in the third step of the chorismate pathway, which leads to the biosynthesis of aromatic amino acids. Catalyzes the cis-dehydration of 3-dehydroquinate (DHQ) and introduces the first double bond of the aromatic ring to yield 3-dehydroshikimate. The chain is 3-dehydroquinate dehydratase from Methanoregula boonei (strain DSM 21154 / JCM 14090 / 6A8).